Here is a 445-residue protein sequence, read N- to C-terminus: Acyl-CoA Delta-4 desaturase (445 aa).

The 78-residue stretch at 19-96 folds into the Cytochrome b5 heme-binding domain; it reads AGVYTWEEVQ…MKPLLVGELA (78 aa). Transmembrane regions (helical) follow at residues 132 to 152, 153 to 173, 266 to 286, and 307 to 327; these read LFFL…LLMV, WHWG…ATAQ, YFFL…NIMM, and YMLC…MMFA.

Belongs to the fatty acid desaturase type 1 family.

Its subcellular location is the membrane. The catalysed reaction is (8Z,11Z,14Z,17Z)-eicosatetraenoyl-CoA + 2 Fe(II)-[cytochrome b5] + O2 + 2 H(+) = (5Z,8Z,11Z,14Z,17Z)-eicosapentaenoyl-CoA + 2 Fe(III)-[cytochrome b5] + 2 H2O. It catalyses the reaction (7Z,10Z,13Z,16Z)-docosatetraenoyl-CoA + 2 Fe(II)-[cytochrome b5] + O2 + 2 H(+) = (4Z,7Z,10Z,13Z,16Z)-docosapentaenoyl-CoA + 2 Fe(III)-[cytochrome b5] + 2 H2O. The enzyme catalyses (7Z,10Z,13Z,16Z,19Z)-docosapentaenoyl-CoA + 2 Fe(II)-[cytochrome b5] + O2 + 2 H(+) = (4Z,7Z,10Z,13Z,16Z,19Z)-docosahexaenoyl-CoA + 2 Fe(III)-[cytochrome b5] + 2 H2O. The protein operates within lipid metabolism; polyunsaturated fatty acid biosynthesis. Functionally, fatty acid desaturase with bifunctional delta-4 and delta-5 activities. Component of a lipid metabolic pathway that catalyzes the biosynthesis of polyunsaturated fatty acids (PUFA) with preference toward n-3 substrates and Delta(4)function. The polypeptide is Acyl-CoA Delta-4 desaturase (Siganus canaliculatus (White-spotted spinefoot)).